The chain runs to 412 residues: Serine hydroxymethyltransferase (412 aa).

(6S)-5,6,7,8-tetrahydrofolate contacts are provided by residues leucine 117 and 121 to 123; that span reads GHL. Lysine 226 is modified (N6-(pyridoxal phosphate)lysine).

This sequence belongs to the SHMT family. In terms of assembly, homodimer. Pyridoxal 5'-phosphate serves as cofactor.

The protein resides in the cytoplasm. The enzyme catalyses (6R)-5,10-methylene-5,6,7,8-tetrahydrofolate + glycine + H2O = (6S)-5,6,7,8-tetrahydrofolate + L-serine. Its pathway is one-carbon metabolism; tetrahydrofolate interconversion. It participates in amino-acid biosynthesis; glycine biosynthesis; glycine from L-serine: step 1/1. Functionally, catalyzes the reversible interconversion of serine and glycine with tetrahydrofolate (THF) serving as the one-carbon carrier. This reaction serves as the major source of one-carbon groups required for the biosynthesis of purines, thymidylate, methionine, and other important biomolecules. Also exhibits THF-independent aldolase activity toward beta-hydroxyamino acids, producing glycine and aldehydes, via a retro-aldol mechanism. This chain is Serine hydroxymethyltransferase, found in Staphylococcus aureus (strain USA300).